Reading from the N-terminus, the 377-residue chain is Probable sensor histidine kinase HK (377 aa).

Disordered regions lie at residues 1-169 (MAHP…RPAD) and 346-377 (LPTP…TSDQ). The segment covering 10–54 (RLQRRHGARSGSSRCRHRRPVPRRRSRSRPRWRAARAHRRHHRRS) has biased composition (basic residues). The segment covering 84–98 (RRPDPRGGANTDHHA) has biased composition (basic and acidic residues). 2 stretches are compositionally biased toward basic residues: residues 99–115 (APRH…RRRD) and 137–146 (TTVRRRRQPR). The region spanning 146–350 (RITHPVGTAD…ELRITLPTPR (205 aa)) is the Histidine kinase domain. Phosphohistidine; by autocatalysis is present on histidine 149. Positions 352–377 (PFHEELPRITSSDTKDPNREHDTSDQ) are enriched in basic and acidic residues.

Post-translationally, autophosphorylated.

It carries out the reaction ATP + protein L-histidine = ADP + protein N-phospho-L-histidine.. In terms of biological role, member of the two-component system HK/TcrA. Phosphorylates TcrA. The polypeptide is Probable sensor histidine kinase HK (Mycobacterium tuberculosis (strain CDC 1551 / Oshkosh)).